The chain runs to 581 residues: Arginine--tRNA ligase (581 aa).

The 'HIGH' region motif lies at 126–136 (PNLAKEMHVGH).

Belongs to the class-I aminoacyl-tRNA synthetase family. In terms of assembly, monomer.

Its subcellular location is the cytoplasm. It carries out the reaction tRNA(Arg) + L-arginine + ATP = L-arginyl-tRNA(Arg) + AMP + diphosphate. The protein is Arginine--tRNA ligase of Shewanella sp. (strain ANA-3).